The primary structure comprises 376 residues: Carbapenem antibiotics biosynthesis protein CarD (376 aa).

The protein belongs to the proline oxidase family.

Its pathway is antibiotic biosynthesis; carbapenem biosynthesis. This chain is Carbapenem antibiotics biosynthesis protein CarD (carD), found in Pectobacterium carotovorum subsp. carotovorum (Erwinia carotovora subsp. carotovora).